The primary structure comprises 151 residues: UPF0735 ACT domain-containing protein SSP1116 (151 aa).

The ACT domain maps to 74 to 149 (TLILYVNDIV…HVSKVELISM (76 aa)).

This sequence belongs to the UPF0735 family.

This Staphylococcus saprophyticus subsp. saprophyticus (strain ATCC 15305 / DSM 20229 / NCIMB 8711 / NCTC 7292 / S-41) protein is UPF0735 ACT domain-containing protein SSP1116.